The following is a 213-amino-acid chain: MTYQLPELGYAYDALEPYFDKETMEIHHSKHHQAYVNNSNALLEKHPELLEKCPGALLKDLTQVPAEKRTAVRNNLGGHVNHTLFWKGLKTGTTLQGALKDAIIRDFGSVEAFQAEFEQAAATRFGSGWAWLVLEEGKLAVVSTANQDSPIMGKDVAGVSGYPIFTLDVWEHAYYLHYQNRRPDYIKAFWNVVNWDEASRRFEEKQAGCGCTK.

Positions 27, 82, 168, and 172 each coordinate Mn(2+).

This sequence belongs to the iron/manganese superoxide dismutase family. As to quaternary structure, homodimer.

The enzyme catalyses 2 superoxide + 2 H(+) = H2O2 + O2. Its activity is regulated as follows. Inhibited by hydrogen peroxide. Its function is as follows. Destroys superoxide anion radicals which are normally produced within the cells and which are toxic to biological systems. The polypeptide is Superoxide dismutase [Mn] (sodA) (Haemophilus ducreyi (strain 35000HP / ATCC 700724)).